The primary structure comprises 289 residues: tRNA pseudouridine synthase B (289 aa).

Asp55 acts as the Nucleophile in catalysis. A disordered region spans residues 243-289 (PGGVLAQHEREGSRALDSAAGNAEHDREEARIADNNREDRSRQHADR). Residues 265–289 (AEHDREEARIADNNREDRSRQHADR) show a composition bias toward basic and acidic residues.

Belongs to the pseudouridine synthase TruB family. Type 1 subfamily.

The catalysed reaction is uridine(55) in tRNA = pseudouridine(55) in tRNA. In terms of biological role, responsible for synthesis of pseudouridine from uracil-55 in the psi GC loop of transfer RNAs. This Chlorobium luteolum (strain DSM 273 / BCRC 81028 / 2530) (Pelodictyon luteolum) protein is tRNA pseudouridine synthase B.